We begin with the raw amino-acid sequence, 67 residues long: LPS-assembly lipoprotein LptM (67 aa).

Residues 1–19 (MKNVFKTLAVLLTLFSLTG) form the signal peptide. Cys-20 carries N-palmitoyl cysteine lipidation. Cys-20 carries the S-diacylglycerol cysteine lipid modification. The tract at residues 26-67 (LYFPPADKNAPPPTKKVDSQTQSTMPDKNDRATGDGPSQVNY) is disordered.

Belongs to the LptM family. In terms of assembly, interacts with the outer membrane embedded portion of the LPS translocon formed by LptD and LptE (LptDE).

It localises to the cell outer membrane. In terms of biological role, component of the lipopolysaccharide (LPS) transport (Lpt) pathway that promotes efficient assembly of the outer membrane LPS translocon (LptDE) by the BAM complex. Facilitates oxidative maturation of LptD by stabilizing a conformation of the LPS translocon in which LptD can efficiently acquire native disulfide bonds, thereby activating the LPS translocon. This Salmonella typhi protein is LPS-assembly lipoprotein LptM.